Here is a 188-residue protein sequence, read N- to C-terminus: MSIKSDKWIRRMAAEYDMISPFEPDLVRQVNGEKVISFGTSSYGYDIRCADEFKVFTNINSTMVDPKNFDEKCFVDVKGEYCIIPPNSFALARTVEYFRIPRNVLTVCLGKSTYARCGIVVNVTPFEPEWEGYVTLEFSNTTPLPAKIYANEGVAQVLFFESDEVCEVSYRDRGGKYMGQVGVTLPRS.

DCTP is bound by residues 111 to 116 (KSTYAR), 135 to 137 (TLE), Gln156, Tyr170, and Gln180. The active-site Proton donor/acceptor is Glu137.

It belongs to the dCTP deaminase family. In terms of assembly, homotrimer.

It carries out the reaction dCTP + H2O + H(+) = dUTP + NH4(+). The protein operates within pyrimidine metabolism; dUMP biosynthesis; dUMP from dCTP (dUTP route): step 1/2. Its function is as follows. Catalyzes the deamination of dCTP to dUTP. The chain is dCTP deaminase from Laribacter hongkongensis (strain HLHK9).